Consider the following 587-residue polypeptide: Kelch-like ECH-associated protein 1B (587 aa).

The BTB domain occupies 44–117; it reads CDVTLRVRYC…AYTASISVGE (74 aa). One can recognise a BACK domain in the interval 153-253; that stretch reads IGIASFAEQI…LTPHFLQRQL (101 aa). Kelch repeat units follow at residues 292–337, 338–388, 389–435, 436–482, 484–529, and 530–576; these read LIYT…VISG, LLYA…VIDG, MIYA…VINR, LLYA…ALGN, IYVM…THHG, and RIYV…VTME.

It belongs to the KEAP1 family. In terms of assembly, homodimer and heterodimer; heterodimerizes with keap1a. Component of the BCR(KEAP1) E3 ubiquitin ligase complex, at least composed of 2 molecules of cul3, 2 molecules of keap1 (keap1a and/or keap1b), and rbx1. Interacts with nfe2l2/nrf2; the interaction is direct. Non-enzymatic covalent modifications of reactive cysteines by electrophile metabolites inactivate the BCR(KEAP1) complex. Widely expressed.

It localises to the cytoplasm. The protein resides in the nucleus. The protein operates within protein modification; protein ubiquitination. With respect to regulation, ubiquitin ligase activity of the BCR(KEAP1) complex is inhibited by oxidative stress and electrophile metabolites such as sulforaphane. Electrophile metabolites react with reactive cysteine residues in keap1 and trigger non-enzymatic covalent modifications of these cysteine residues, leading to inactivate the ubiquitin ligase activity of the BCR(KEAP1) complex. Functionally, substrate-specific adapter of a BCR (BTB-CUL3-RBX1) E3 ubiquitin ligase complex that regulates the response to oxidative stress by targeting nfe2l2/nrf2 for ubiquitination. Keap1 acts as a key sensor of oxidative and electrophilic stress: in normal conditions, the BCR(KEAP1) complex mediates ubiquitination and degradation of nfe2l2/nrf2, a transcription factor regulating expression of many cytoprotective genes. In response to oxidative stress, different electrophile metabolites trigger non-enzymatic covalent modifications of highly reactive cysteine residues in KEAP1, leading to inactivate the ubiquitin ligase activity of the BCR(KEAP1) complex, promoting nfe2l2/nrf2 nuclear accumulation and expression of phase II detoxifying enzymes. This chain is Kelch-like ECH-associated protein 1B, found in Danio rerio (Zebrafish).